The sequence spans 161 residues: Large ribosomal subunit protein uL15 (161 aa).

The interval 1–43 is disordered; it reads MKLSDIADNAGARKKRMRVGRGIGSGKGKTSGRGGKGQTARSG. The span at 21 to 37 shows a compositional bias: gly residues; that stretch reads RGIGSGKGKTSGRGGKG.

It belongs to the universal ribosomal protein uL15 family. In terms of assembly, part of the 50S ribosomal subunit.

Its function is as follows. Binds to the 23S rRNA. This Bradyrhizobium sp. (strain BTAi1 / ATCC BAA-1182) protein is Large ribosomal subunit protein uL15.